Consider the following 232-residue polypeptide: 7-cyano-7-deazaguanine synthase (232 aa).

8-18 lines the ATP pocket; that stretch reads FSGGQDSTTCL. Residues Cys187, Cys196, Cys199, and Cys202 each contribute to the Zn(2+) site.

Belongs to the QueC family. Requires Zn(2+) as cofactor.

It catalyses the reaction 7-carboxy-7-deazaguanine + NH4(+) + ATP = 7-cyano-7-deazaguanine + ADP + phosphate + H2O + H(+). The protein operates within purine metabolism; 7-cyano-7-deazaguanine biosynthesis. Catalyzes the ATP-dependent conversion of 7-carboxy-7-deazaguanine (CDG) to 7-cyano-7-deazaguanine (preQ(0)). The protein is 7-cyano-7-deazaguanine synthase of Vibrio campbellii (strain ATCC BAA-1116).